Consider the following 319-residue polypeptide: Ribonucleoside-diphosphate reductase small chain (319 aa).

Positions 70, 101, and 104 each coordinate Fe cation. Tyrosine 108 is an active-site residue. Fe cation is bound by residues glutamate 163, glutamate 197, and histidine 200. The segment at 313–319 (FSLDVDF) is interaction with R1.

It belongs to the ribonucleoside diphosphate reductase small chain family. In terms of assembly, interacts with RNR1/OPG080 subunit. Can interact with host RNR1 supunit. Requires Fe cation as cofactor.

The catalysed reaction is a 2'-deoxyribonucleoside 5'-diphosphate + [thioredoxin]-disulfide + H2O = a ribonucleoside 5'-diphosphate + [thioredoxin]-dithiol. Functionally, ribonucleoside-diphosphate reductase holoenzyme provides the precursors necessary for viral DNA synthesis. Allows virus growth in non-dividing cells. Catalyzes the biosynthesis of deoxyribonucleotides from the corresponding ribonucleotides. The sequence is that of Ribonucleoside-diphosphate reductase small chain (OPG048) from Homo sapiens (Human).